Reading from the N-terminus, the 1241-residue chain is DNA-directed RNA polymerase subunit beta (1241 aa).

Positions 1201-1224 (AEEEQDTDVDYITEDDFESPDPEI) are disordered.

It belongs to the RNA polymerase beta chain family. The RNAP catalytic core consists of 2 alpha, 1 beta, 1 beta' and 1 omega subunit. When a sigma factor is associated with the core the holoenzyme is formed, which can initiate transcription.

It catalyses the reaction RNA(n) + a ribonucleoside 5'-triphosphate = RNA(n+1) + diphosphate. In terms of biological role, DNA-dependent RNA polymerase catalyzes the transcription of DNA into RNA using the four ribonucleoside triphosphates as substrates. This is DNA-directed RNA polymerase subunit beta from Alkaliphilus oremlandii (strain OhILAs) (Clostridium oremlandii (strain OhILAs)).